Reading from the N-terminus, the 362-residue chain is MTVTNKPVEPANVPVMDFEAIHASVGNERKEYLRQLDEAWSHHGAVYVINHSIGTETLEEAFVWCKKFFDLPLAVKNSVHIPPDVSKHFQGWTGTGEAISSQGVWDPDEIERLRKEMPTELKEAMELQDPCGTYPPGNPDLNLVEQHLPGYLDFLKKWFAACYKQSLQNMRLVCEILGMEDLDYIGKKFEPRHMSTHSTWNYFLGQPVSQLASGSSNRLNAHTDYCQFTMLFQDMVGGLELHDYEEDIYRPVPPIKGAMIVQVGDLLEKQTNGRWRSALHRVTAPSRYMYGGSPGGDDELVQRYSLVFFGHLNLDEMIKPLPGCEKPGKWSTLEWKDLMTAGQWLARRVALEYERKTAATVM.

The 114-residue stretch at 199–312 (TWNYFLGQPV…RYSLVFFGHL (114 aa)) folds into the Fe2OG dioxygenase domain. 3 residues coordinate Fe cation: histidine 222, aspartate 224, and histidine 280. Arginine 303 serves as a coordination point for 2-oxoglutarate.

This sequence belongs to the iron/ascorbate-dependent oxidoreductase family. It depends on Fe(2+) as a cofactor.

The protein operates within alkaloid biosynthesis. Its function is as follows. 2-oxoglutarate-dependent dioxygenase; part of the gene cluster that mediates the biosynthesis of loline alkaloids, potent insecticidal agents composed of a pyrrolizidine ring system and an uncommon ether bridge linking carbons 2 and 7. Lolines are structurally differentiated by the various modifications of the L-amino group and include norloline, loline, N-methylloline, N-acetylloline, N-acetylnorloline, and N-formylloline. The first committed step is the condensation of O-acetyl-L-homoserine (derived from L-aspartic acid) and L-proline, probably catalyzed by the gamma-type pyridoxal 5'-phosphate(PLP)-dependent enzyme lolC, to give the diamino diacid, NACPP. Ensuing cyclization, decarboxylation, and acetylation steps yield 1-exo-acetamidopyrrolizidine (AcAP). LolO is required for installation of the ether bridge upon the pathway intermediate, 1-exo-acetamidopyrrolizidine (AcAP). In sequential 2-oxoglutarate- and O(2)-consuming steps, lolO removes hydrogens from C2 and C7 of AcAP to form both carbon-oxygen bonds in N-acetylnorloline (NANL), the precursor to all other lolines. The enzymes lolD, lolE, lolF and lolT have also been proposed to be involved in the ether-bridge installation. Further processing of the exocyclic moiety of NANL by fungal N-acetamidase (LolN), methyltransferase (LolM), and cytochrome P450 (LolP) enzymes, with occasional involvement of a plant acetyltransferase, generates the other known lolines. LolN transforms NANL to norlonine which is monomethylated and dimethylated to respectively lonine and N-methyllonine (NML) by lolM. LolP catalyzes hydroxylation of the methyl group in N-methylloline (NML) and further oxygenation to N-formylloline (NFL). A plant acetyltransferase is responsible for the acetylation of loline to form N-acetylloline (NAL). LolA might interact with aspartate kinase to prevent feedback inhibition of its activity by these end products and thereby promote production of L-homoserine from L-aspartate. The protein is 2-oxoglutarate-dependent dioxygenase lolO2 of Epichloe uncinata (Endophyte fungus).